We begin with the raw amino-acid sequence, 361 residues long: Peptide chain release factor 1 (361 aa).

Glutamine 238 carries the post-translational modification N5-methylglutamine.

It belongs to the prokaryotic/mitochondrial release factor family. Methylated by PrmC. Methylation increases the termination efficiency of RF1.

The protein localises to the cytoplasm. Its function is as follows. Peptide chain release factor 1 directs the termination of translation in response to the peptide chain termination codons UAG and UAA. This is Peptide chain release factor 1 from Mesomycoplasma hyopneumoniae (strain 7448) (Mycoplasma hyopneumoniae).